The following is a 730-amino-acid chain: Catalase R (730 aa).

His-105 is a catalytic residue. Tyr-392 provides a ligand contact to heme. Positions 403–433 (PNFEQIPVNRPRKPVHNNNRDGFGQQQIPTN) are disordered.

It belongs to the catalase family. The cofactor is heme.

It catalyses the reaction 2 H2O2 = O2 + 2 H2O. Its function is as follows. Occurs in almost all aerobically respiring organisms and serves to protect cells from the toxic effects of hydrogen peroxide. The polypeptide is Catalase R (catR) (Aspergillus niger).